Reading from the N-terminus, the 315-residue chain is tRNA dimethylallyltransferase (315 aa).

10–17 (GPTEVGKT) contributes to the ATP binding site. Substrate is bound at residue 12 to 17 (TEVGKT). Residues 35–38 (DSMQ) form an interaction with substrate tRNA region.

The protein belongs to the IPP transferase family. In terms of assembly, monomer. Mg(2+) serves as cofactor.

The enzyme catalyses adenosine(37) in tRNA + dimethylallyl diphosphate = N(6)-dimethylallyladenosine(37) in tRNA + diphosphate. In terms of biological role, catalyzes the transfer of a dimethylallyl group onto the adenine at position 37 in tRNAs that read codons beginning with uridine, leading to the formation of N6-(dimethylallyl)adenosine (i(6)A). The polypeptide is tRNA dimethylallyltransferase (Geobacillus thermodenitrificans (strain NG80-2)).